A 95-amino-acid chain; its full sequence is Ferredoxin-4 (95 aa).

The 2Fe-2S ferredoxin-type domain occupies 2–95 (DKATLTFTDV…LGGAVKVRPA (94 aa)). 4 residues coordinate [2Fe-2S] cluster: cysteine 38, cysteine 43, cysteine 46, and cysteine 81.

This sequence belongs to the 2Fe2S plant-type ferredoxin family. [2Fe-2S] cluster is required as a cofactor.

Ferredoxins are iron-sulfur proteins that transfer electrons in a wide variety of metabolic reactions. This ferredoxin is required for nitrogen fixation. The polypeptide is Ferredoxin-4 (fdxC) (Rhodobacter capsulatus (Rhodopseudomonas capsulata)).